The sequence spans 659 residues: Zinc finger protein 304 (659 aa).

The KRAB domain maps to 14–88 (VTFEDVFVYF…TAESGLFQKA (75 aa)). 16 C2H2-type zinc fingers span residues 89–111 (HPCE…QGSH), 115–139 (KLCT…QKQH), 251–273 (FRCL…RKIH), 279–301 (HVCK…QKFH), 307–329 (YTCS…QRVH), 335–357 (YDCS…QRIH), 363–385 (YKCN…QRFH), 391–413 (YECS…WRIH), 419–441 (YECI…RRVH), 447–469 (YVCS…QIIH), 475–497 (YECS…QKIH), 503–525 (YECG…QRIH), 531–553 (YECN…QRVH), 559–581 (YVCS…KKVH), 587–609 (YECS…QRVH), and 615–637 (YVCS…QKAH).

This sequence belongs to the krueppel C2H2-type zinc-finger protein family. Probably part of a corepressor complex containing ZNF304, TRIM28, SETDB1 and DNMT1; leading to promoter hypermethylation and transcriptional silencing. Probably associates with Polycomb group (PcG) complexes; leading to trimethylation of 'Lys-27' of histone H3 (H3K27me3). Interacts with USP28. In terms of processing, deubiquitinated by USP28; the deubiquitination leads to the stabilization of ZNF304 from proteolytic degradation. Expressed in undifferentiated embryonic stem cells (ESCs). Expressed strongly in colorectal cancers cells (CRCs). Expressed strongly in ovarian carcinoma (OC) tumor cell lines compared to non-transformed ovarian epithelial cells (at protein level). Expressed in lymphoid tissues, thyroid, adrenal gland, prostate, pancreas and skeletal muscles.

It localises to the nucleus. In terms of biological role, acts as a transcriptional regulator and plays a role in gene silencing. Probably forms a corepressor complex required for activated KRAS-mediated promoter hypermethylation and transcriptional silencing of several tumor suppressor genes (TSGs) or other tumor-related genes in colorectal cancer (CRC) cells. Also required to maintain a transcriptionally repressive state of genes in undifferentiated embryonic stem cells (ESCs) by inducing trimethylation of 'Lys-27' of histone H3 (H3K27me3) in a Polycomb group (PcG) complexes-dependent manner. Associates at promoter regions of TSGs and mediates the recruitment of the corepressor complex containing the scaffolding protein TRIM28, methyltransferase DNMT1 and histone methyltransferase SETDB1 and/or the PcG complexes at those sites. Transcription factor involved in the metastatic cascade process by inducing cell migration and proliferation and gain resistance to anoikis of ovarian carcinoma (OC) cells via integrin-mediated signaling pathways. Associates with the ITGB1 promoter and positively regulates beta-1 integrin transcription expression. Promotes angiogenesis. Promotes tumor growth. In Homo sapiens (Human), this protein is Zinc finger protein 304.